Here is a 209-residue protein sequence, read N- to C-terminus: Large ribosomal subunit protein uL3 (209 aa).

The protein belongs to the universal ribosomal protein uL3 family. In terms of assembly, part of the 50S ribosomal subunit. Forms a cluster with proteins L14 and L19.

Its function is as follows. One of the primary rRNA binding proteins, it binds directly near the 3'-end of the 23S rRNA, where it nucleates assembly of the 50S subunit. This Clostridium tetani (strain Massachusetts / E88) protein is Large ribosomal subunit protein uL3.